Here is a 420-residue protein sequence, read N- to C-terminus: UDP-N-acetylglucosamine 1-carboxyvinyltransferase (420 aa).

Lys23–Asn24 is a phosphoenolpyruvate binding site. Arg92 lines the UDP-N-acetyl-alpha-D-glucosamine pocket. Cys116 functions as the Proton donor in the catalytic mechanism. Cys116 bears the 2-(S-cysteinyl)pyruvic acid O-phosphothioketal mark. UDP-N-acetyl-alpha-D-glucosamine contacts are provided by residues Arg121 to Leu125, Lys161 to Val164, Asp306, and Ile328.

It belongs to the EPSP synthase family. MurA subfamily.

Its subcellular location is the cytoplasm. It catalyses the reaction phosphoenolpyruvate + UDP-N-acetyl-alpha-D-glucosamine = UDP-N-acetyl-3-O-(1-carboxyvinyl)-alpha-D-glucosamine + phosphate. It functions in the pathway cell wall biogenesis; peptidoglycan biosynthesis. Cell wall formation. Adds enolpyruvyl to UDP-N-acetylglucosamine. The sequence is that of UDP-N-acetylglucosamine 1-carboxyvinyltransferase from Photobacterium profundum (strain SS9).